The chain runs to 143 residues: Putative aryl-alcohol dehydrogenase AAD15 (143 aa).

Belongs to the aldo/keto reductase family. Aldo/keto reductase 2 subfamily.

Its function is as follows. Putative aryl-alcohol dehydrogenase. The sequence is that of Putative aryl-alcohol dehydrogenase AAD15 (AAD15) from Saccharomyces cerevisiae (strain ATCC 204508 / S288c) (Baker's yeast).